Reading from the N-terminus, the 527-residue chain is Glucose-6-phosphate isomerase (527 aa).

The Proton donor role is filled by Glu-323. Residues His-352 and Lys-454 contribute to the active site.

This sequence belongs to the GPI family.

The protein resides in the cytoplasm. The enzyme catalyses alpha-D-glucose 6-phosphate = beta-D-fructose 6-phosphate. Its pathway is carbohydrate biosynthesis; gluconeogenesis. The protein operates within carbohydrate degradation; glycolysis; D-glyceraldehyde 3-phosphate and glycerone phosphate from D-glucose: step 2/4. Catalyzes the reversible isomerization of glucose-6-phosphate to fructose-6-phosphate. In Prochlorococcus marinus (strain MIT 9215), this protein is Glucose-6-phosphate isomerase.